Reading from the N-terminus, the 127-residue chain is ALK and LTK ligand 1 (127 aa).

An N-terminal signal peptide occupies residues Met-1–Gly-27. Cystine bridges form between Cys-88–Cys-124 and Cys-102–Cys-111.

The protein belongs to the ALKAL family.

Its subcellular location is the secreted. It localises to the cell membrane. Functionally, cytokine that acts as a physiological ligand for receptor tyrosine kinase LTK, leading to its activation. Monomeric ALKAL1 binds to LTK, leading to LTK homodimerization and activation. In contrast to ALKAL2, does not act as a potent physiological ligand for ALK. The sequence is that of ALK and LTK ligand 1 from Mus musculus (Mouse).